We begin with the raw amino-acid sequence, 133 residues long: MRYMKLFFLVTDIGFILYWLSAGFSLIPESWAFKHHDHPFMIAWNWSFFPLDILISVTGLYSLYLQRVNRADWKLMALISLVLTCCSGLQALSFWTFSSDFDLVWWLFNGYLLIYPLFFIHLLLKEGRRTKQS.

The next 4 membrane-spanning stretches (helical) occupy residues 5-27 (KLFFLVTDIGFILYWLSAGFSLI), 42-64 (IAWNWSFFPLDILISVTGLYSLY), 77-99 (ALISLVLTCCSGLQALSFWTFSS), and 103-125 (LVWWLFNGYLLIYPLFFIHLLLK).

It is found in the cell membrane. This is an uncharacterized protein from Bacillus subtilis (strain 168).